Here is a 252-residue protein sequence, read N- to C-terminus: UPF0246 protein LJ_0535 (252 aa).

The protein belongs to the UPF0246 family.

The protein is UPF0246 protein LJ_0535 of Lactobacillus johnsonii (strain CNCM I-12250 / La1 / NCC 533).